Reading from the N-terminus, the 83-residue chain is Small integral membrane protein 22 (83 aa).

A helical transmembrane segment spans residues 32-52 (VAFIVFLTFMGTVLLLLLLVV). Residues 60 to 83 (SPGPRRESPRKERPKGVDNLALEP) are disordered. The segment covering 63 to 75 (PRRESPRKERPKG) has biased composition (basic and acidic residues).

In terms of assembly, interacts with CANX and DDOST. Interacts with SQLE; this interaction modulates lipid droplet formation.

The protein resides in the membrane. The protein localises to the late endosome. In terms of biological role, may modulate lipid droplet formation throught interaction with SQLE. This Homo sapiens (Human) protein is Small integral membrane protein 22.